The following is a 422-amino-acid chain: UDP-N-acetylglucosamine 1-carboxyvinyltransferase (422 aa).

22–23 (KN) lines the phosphoenolpyruvate pocket. A UDP-N-acetyl-alpha-D-glucosamine-binding site is contributed by R92. Catalysis depends on C116, which acts as the Proton donor. C116 is subject to 2-(S-cysteinyl)pyruvic acid O-phosphothioketal. Residues 121 to 125 (RPVDL), D307, and L329 contribute to the UDP-N-acetyl-alpha-D-glucosamine site.

Belongs to the EPSP synthase family. MurA subfamily.

The protein localises to the cytoplasm. It catalyses the reaction phosphoenolpyruvate + UDP-N-acetyl-alpha-D-glucosamine = UDP-N-acetyl-3-O-(1-carboxyvinyl)-alpha-D-glucosamine + phosphate. The protein operates within cell wall biogenesis; peptidoglycan biosynthesis. In terms of biological role, cell wall formation. Adds enolpyruvyl to UDP-N-acetylglucosamine. This Aliarcobacter butzleri (strain RM4018) (Arcobacter butzleri) protein is UDP-N-acetylglucosamine 1-carboxyvinyltransferase.